Reading from the N-terminus, the 346-residue chain is Biotin synthase (346 aa).

One can recognise a Radical SAM core domain in the interval 38–256 (QQVQVSTLLS…IAVARIMMPT (219 aa)). [4Fe-4S] cluster is bound by residues Cys53, Cys57, and Cys60. [2Fe-2S] cluster is bound by residues Cys97, Cys128, Cys188, and Arg260.

Belongs to the radical SAM superfamily. Biotin synthase family. In terms of assembly, homodimer. Requires [4Fe-4S] cluster as cofactor. [2Fe-2S] cluster serves as cofactor.

The enzyme catalyses (4R,5S)-dethiobiotin + (sulfur carrier)-SH + 2 reduced [2Fe-2S]-[ferredoxin] + 2 S-adenosyl-L-methionine = (sulfur carrier)-H + biotin + 2 5'-deoxyadenosine + 2 L-methionine + 2 oxidized [2Fe-2S]-[ferredoxin]. Its pathway is cofactor biosynthesis; biotin biosynthesis; biotin from 7,8-diaminononanoate: step 2/2. Functionally, catalyzes the conversion of dethiobiotin (DTB) to biotin by the insertion of a sulfur atom into dethiobiotin via a radical-based mechanism. This chain is Biotin synthase, found in Salmonella newport (strain SL254).